Reading from the N-terminus, the 103-residue chain is Large ribosomal subunit protein bL21 (103 aa).

It belongs to the bacterial ribosomal protein bL21 family. In terms of assembly, part of the 50S ribosomal subunit. Contacts protein L20.

In terms of biological role, this protein binds to 23S rRNA in the presence of protein L20. The polypeptide is Large ribosomal subunit protein bL21 (Laribacter hongkongensis (strain HLHK9)).